A 377-amino-acid chain; its full sequence is Probable aspartic-type endopeptidase CTSD (377 aa).

Residues 1 to 292 (SLIDTGASRT…DFDKNRVGLA (292 aa)) form the Peptidase A1 domain. Residue aspartate 4 is part of the active site. An N-linked (GlcNAc...) asparagine glycan is attached at asparagine 58. Aspartate 186 is a catalytic residue. A disordered region spans residues 296-351 (YGETKDPPSSSHPPPAPTSNKASGGSPGLPEQSGTSSATTSTTGEPSSGSTASPSA). Residues 328-351 (SGTSSATTSTTGEPSSGSTASPSA) are compositionally biased toward low complexity. Serine 350 carries GPI-anchor amidated serine lipidation. A propeptide spans 351–377 (AASSVSMSAWLSLAVFLSTASSLILWD) (removed in mature form).

The protein belongs to the peptidase A1 family.

The protein localises to the cell membrane. In terms of biological role, secreted aspartic-type endopeptidase which is secreted and contributes to virulence. The chain is Probable aspartic-type endopeptidase CTSD (CTSD) from Arthroderma otae (strain ATCC MYA-4605 / CBS 113480) (Microsporum canis).